A 156-amino-acid polypeptide reads, in one-letter code: Transcriptional repressor NrdR (156 aa).

A zinc finger lies at 3-34; the sequence is CPFCGSMDTRVLDSRPTLDGAAIRRRRECISC. One can recognise an ATP-cone domain in the interval 49-139; that stretch reads VLVIKKDGRR…VYRDFREVDQ (91 aa).

The protein belongs to the NrdR family. Zn(2+) is required as a cofactor.

In terms of biological role, negatively regulates transcription of bacterial ribonucleotide reductase nrd genes and operons by binding to NrdR-boxes. The polypeptide is Transcriptional repressor NrdR (Thermotoga neapolitana (strain ATCC 49049 / DSM 4359 / NBRC 107923 / NS-E)).